Here is a 332-residue protein sequence, read N- to C-terminus: uncharacterized protein (332 aa).

This is an uncharacterized protein from Schizosaccharomyces pombe (strain 972 / ATCC 24843) (Fission yeast).